A 128-amino-acid polypeptide reads, in one-letter code: MDKTFCVVVQNRIKEGYRRAGFSFHLGDNSLAAVSESQLAQLKADPRLVVQITETGSQEGGEGLSKEPAGSDEQKQLRADPPSTDLNTFTVEQLKAQLTERGITFKQSATKAELIALFAPADGEKSEA.

A disordered region spans residues 53–87 (TETGSQEGGEGLSKEPAGSDEQKQLRADPPSTDLN).

This sequence to phage Mu protein gp35. In terms of assembly, monomer.

This chain is Mu-like prophage FluMu protein gp35, found in Haemophilus influenzae (strain ATCC 51907 / DSM 11121 / KW20 / Rd).